Here is a 465-residue protein sequence, read N- to C-terminus: Ribulose bisphosphate carboxylase large chain (465 aa).

Position 4 is an N6,N6,N6-trimethyllysine (K4). Substrate contacts are provided by N113 and T163. K165 functions as the Proton acceptor in the catalytic mechanism. Residue K167 coordinates substrate. Mg(2+)-binding residues include K191, D193, and E194. The residue at position 191 (K191) is an N6-carboxylysine. The Proton acceptor role is filled by H284. Substrate-binding residues include R285, H317, and S369.

It belongs to the RuBisCO large chain family. Type I subfamily. Heterohexadecamer of 8 large chains and 8 small chains; disulfide-linked. The disulfide link is formed within the large subunit homodimers. Mg(2+) serves as cofactor. The disulfide bond which can form in the large chain dimeric partners within the hexadecamer appears to be associated with oxidative stress and protein turnover.

It localises to the plastid. Its subcellular location is the chloroplast. The enzyme catalyses 2 (2R)-3-phosphoglycerate + 2 H(+) = D-ribulose 1,5-bisphosphate + CO2 + H2O. The catalysed reaction is D-ribulose 1,5-bisphosphate + O2 = 2-phosphoglycolate + (2R)-3-phosphoglycerate + 2 H(+). Functionally, ruBisCO catalyzes two reactions: the carboxylation of D-ribulose 1,5-bisphosphate, the primary event in carbon dioxide fixation, as well as the oxidative fragmentation of the pentose substrate in the photorespiration process. Both reactions occur simultaneously and in competition at the same active site. The chain is Ribulose bisphosphate carboxylase large chain from Ailanthus altissima (Tree-of-heaven).